The sequence spans 651 residues: Translation initiation factor eIF2B subunit delta (651 aa).

Residues 1 to 108 are disordered; the sequence is MSESEAKSRS…NERNVKKSTL (108 aa). Ser2 carries the post-translational modification N-acetylserine. Residues 11 to 28 are compositionally biased toward low complexity; the sequence is ATPPSKAKQATPTTTAAA. 2 stretches are compositionally biased toward basic and acidic residues: residues 30–49 and 76–90; these read GEKK…EKAA and KQLQ…EQKQ. Ser106 carries the post-translational modification Phosphoserine. Thr121 bears the Phosphothreonine mark. The tract at residues 566 to 600 is disordered; the sequence is AMENKPKGNKIGGKKGSEGESKDASNEEDSNSKNI. Positions 580–590 are enriched in basic and acidic residues; that stretch reads KGSEGESKDAS.

It belongs to the eIF-2B alpha/beta/delta subunits family. Component of the translation initiation factor 2B (eIF2B) complex which is a heterodecamer of two sets of five different subunits: alpha, beta, gamma, delta and epsilon. Subunits alpha, beta and delta comprise a regulatory subcomplex and subunits epsilon and gamma comprise a catalytic subcomplex. Within the complex, the hexameric regulatory complex resides at the center, with the two heterodimeric catalytic subcomplexes bound on opposite sides.

Its subcellular location is the cytoplasm. The protein localises to the cytosol. Its function is as follows. Acts as a component of the translation initiation factor 2B (eIF2B) complex, which catalyzes the exchange of GDP for GTP on the eukaryotic initiation factor 2 (eIF2) complex gamma subunit. Its guanine nucleotide exchange factor activity is repressed when bound to eIF2 complex phosphorylated on the alpha subunit, thereby limiting the amount of methionyl-initiator methionine tRNA available to the ribosome and consequently global translation is repressed. It activates the synthesis of GCN4 in yeast under amino acid starvation conditions by suppressing the inhibitory effects of multiple AUG codons present in the leader of GCN4 mRNA. It may promote either repression or activation of GCN4 expression depending on amino acid availability. GCD2 is also required for cell viability. Its function can partially be replaced by GCN3 under normal growth conditions in GCD2-defective mutants, under AA starvation conditions GCN3 is an antagonist (GCN4 translational activator). This is Translation initiation factor eIF2B subunit delta (GCD2) from Saccharomyces cerevisiae (strain ATCC 204508 / S288c) (Baker's yeast).